A 292-amino-acid chain; its full sequence is MASSMRSLFSDHGRYFEAFRRFLNNSTEYQCMREFMDKQLPGIIARIGGSKSEIKVLSIGGGAGEMDLHILSKVKAQYPGVHIINEVVEPSAEQITKYKELVAKTSNLENIKFAWHKETSSEYQNRVMEQKEIQKWDFIHMIQMLYYVDDIPATLKFFHSLLATNAKILIILVSGKSGWLKFWKKYRSRLPQNDLCQYVTSFDIIQMLDSLGIKYQCYDLLSTMDITDCFIDGNENGELLWDFLTETCNFLTTAPPDLRAEIMKDLQGPEFIVRKEGKILFDNSLSFITIEA.

Residue glutamate 28 participates in substrate binding. S-adenosyl-L-methionine-binding residues include glycine 60, glutamate 89, glutamine 94, serine 120, and isoleucine 142. Residue asparagine 283 coordinates substrate.

The protein belongs to the class I-like SAM-binding methyltransferase superfamily. HNMT family. Monomer. As to expression, expressed in jejunum, brain &gt; lung, spleen, stomach &gt; liver, kidney.

Its subcellular location is the cytoplasm. It carries out the reaction histamine + S-adenosyl-L-methionine = N(tau)-methylhistamine + S-adenosyl-L-homocysteine + H(+). Its function is as follows. Inactivates histamine by N-methylation. Plays an important role in degrading histamine and in regulating the airway response to histamine. The chain is Histamine N-methyltransferase (HNMT) from Cavia porcellus (Guinea pig).